A 188-amino-acid chain; its full sequence is MADEQTLDTQNLDANQAPEASGDDLAARVQVLEEQLAGAQDQALRVAADLQNVRRRAEQDVEKAHKFALEKFAGDLLPVIDSLERGLELSNPDDESIRPMREGIELTLKMFHDTLKRYQLEAIDPHGEPFNAEQHQAMAMQESADVEPNSVLKVFQKGYQLNGRLLRPAMVVVSKAPAPVSPSIDEKA.

The disordered stretch occupies residues 1-22; sequence MADEQTLDTQNLDANQAPEASG.

The protein belongs to the GrpE family. In terms of assembly, homodimer.

The protein resides in the cytoplasm. Its function is as follows. Participates actively in the response to hyperosmotic and heat shock by preventing the aggregation of stress-denatured proteins, in association with DnaK and GrpE. It is the nucleotide exchange factor for DnaK and may function as a thermosensor. Unfolded proteins bind initially to DnaJ; upon interaction with the DnaJ-bound protein, DnaK hydrolyzes its bound ATP, resulting in the formation of a stable complex. GrpE releases ADP from DnaK; ATP binding to DnaK triggers the release of the substrate protein, thus completing the reaction cycle. Several rounds of ATP-dependent interactions between DnaJ, DnaK and GrpE are required for fully efficient folding. In Pseudomonas fluorescens (strain ATCC BAA-477 / NRRL B-23932 / Pf-5), this protein is Protein GrpE.